Consider the following 151-residue polypeptide: Putative pre-16S rRNA nuclease (151 aa).

It belongs to the YqgF nuclease family.

The protein localises to the cytoplasm. In terms of biological role, could be a nuclease involved in processing of the 5'-end of pre-16S rRNA. The polypeptide is Putative pre-16S rRNA nuclease (Prochlorococcus marinus (strain MIT 9515)).